Consider the following 527-residue polypeptide: Protein Lilipod (527 aa).

Topologically, residues 1 to 22 (MDEEEEEEVTDLKLQLFHNTVR) are extracellular. The chain crosses the membrane as a helical span at residues 23 to 43 (EHIIFLLLIILLYSSSYVVVS). The Cytoplasmic portion of the chain corresponds to 44-65 (RFRRRDRDDLYSNDEDEVLVYR). The helical transmembrane segment at 66-86 (ISFWLCTFTLAVAEGAAMLLP) threads the bilayer. The Extracellular portion of the chain corresponds to 87–117 (VSIASNEVLLLYPNSYYVKWLNSSLIQGLWN). The helical transmembrane segment at 118–138 (HVFLFSNLSLFIFLPFVYLFS) threads the bilayer. At 139–160 (ESTGFVGNKKGILPRVYETFTV) the chain is on the cytoplasmic side. The helical transmembrane segment at 161–181 (FMLMAIIVLVLTAVLSAVFGI) threads the bilayer. The Extracellular segment spans residues 182 to 194 (EKLQFFWFLNLGS). Residues 195 to 215 (VHLPFLYSCVSFLGVMLMLIC) traverse the membrane as a helical segment. Residues 216–341 (TPYGFVRLFG…LRTSSTFQRT (126 aa)) are Cytoplasmic-facing. Residues 342–362 (FVYPLAMLLLLFCTAVTILLV) traverse the membrane as a helical segment. Residues 363-395 (VQNTLELLIGIKALPLSTRQFALGISSLSKLGP) lie on the Extracellular side of the membrane. A helical membrane pass occupies residues 396-416 (FGAGLEVCLIFYLGATSVVGF). The Cytoplasmic portion of the chain corresponds to 417 to 433 (YSMPFMRKVCPKRRQTS). A helical transmembrane segment spans residues 434 to 454 (LPQLMLNCGFMLVLSSALPLL). The Extracellular segment spans residues 455–468 (SRIIGITNFDLLGD). The helical transmembrane segment at 469–489 (FGAIEWLGNFQIVLLYNLVFG) threads the bilayer. Residues 490 to 527 (TTTALCLANKFTATVRRELRARLVENYVLFTNYISFIN) are Cytoplasmic-facing.

Belongs to the LIMR family. In terms of tissue distribution, in the ovary, detected in germline stem cells and their progeny. Also detected in the somatic follicular epithelium.

It is found in the cell membrane. In terms of biological role, required during oogenesis to promote self-renewal of germline stem cells, probably by enhancing BMP signaling activity. The polypeptide is Protein Lilipod (Drosophila melanogaster (Fruit fly)).